A 270-amino-acid chain; its full sequence is Bis(5'-nucleosyl)-tetraphosphatase, symmetrical (270 aa).

The protein belongs to the Ap4A hydrolase family.

The enzyme catalyses P(1),P(4)-bis(5'-adenosyl) tetraphosphate + H2O = 2 ADP + 2 H(+). Hydrolyzes diadenosine 5',5'''-P1,P4-tetraphosphate to yield ADP. This Actinobacillus pleuropneumoniae serotype 3 (strain JL03) protein is Bis(5'-nucleosyl)-tetraphosphatase, symmetrical.